A 397-amino-acid chain; its full sequence is 2,3,4,5-tetrahydropyridine-2,6-dicarboxylate N-succinyltransferase (397 aa).

Glu-265 functions as the Acyl-anhydride intermediate in the catalytic mechanism. Succinyl-CoA is bound by residues Arg-267, Gly-282, Ser-285, Ala-308, 323–324 (DA), Gly-331, Lys-360, and 373–376 (RQNS).

The protein belongs to the type 2 tetrahydrodipicolinate N-succinyltransferase family. In terms of assembly, homotrimer.

It is found in the cytoplasm. The enzyme catalyses (S)-2,3,4,5-tetrahydrodipicolinate + succinyl-CoA + H2O = (S)-2-succinylamino-6-oxoheptanedioate + CoA. It participates in amino-acid biosynthesis; L-lysine biosynthesis via DAP pathway; LL-2,6-diaminopimelate from (S)-tetrahydrodipicolinate (succinylase route): step 1/3. In terms of biological role, catalyzes the conversion of the cyclic tetrahydrodipicolinate (THDP) into the acyclic N-succinyl-L-2-amino-6-oxopimelate using succinyl-CoA. In Sulfurovum sp. (strain NBC37-1), this protein is 2,3,4,5-tetrahydropyridine-2,6-dicarboxylate N-succinyltransferase.